Consider the following 128-residue polypeptide: UPF0325 protein YaeH (128 aa).

Belongs to the UPF0325 family.

The polypeptide is UPF0325 protein YaeH (Shigella boydii serotype 18 (strain CDC 3083-94 / BS512)).